We begin with the raw amino-acid sequence, 387 residues long: MEVLAAETTSQQERLQAIAEKRKRQAEIENKRRQLEDERRQLQHLKSKALRERWLLEGTPSSASEGDEDLRRQMQDDEQKTRLLEDSVSRLEKEIEVLERGDSAPATAKENAAAPSPVRAPAPSPAKEERKTEVVMNSQQTPVGTPKDKRVSNTPLRTVDGSPMMKAAMYSVEITVEKDKVTGETRVLSSTTLLPRQPLPLGIKVYEDETKVVHAVDGTAENGIHPLSSSEVDELIHKADEVTLSEAGSTAGAAETRGAVEGAARTTPSRREITGVQAQPGEATSGPPGIQPGQEPPVTMIFMGYQNVEDEAETKKVLGLQDTITAELVVIEDAAEPKEPAPPNGSAAEPPTEAASREENQAGPEATTSDPQDLDMKKHRCKCCSIM.

Residue methionine 1 is modified to N-acetylmethionine. Residues 9–101 (TSQQERLQAI…EKEIEVLERG (93 aa)) are a coiled coil. Composition is skewed to basic and acidic residues over residues 31–41 (KRRQLEDERRQ) and 69–102 (DLRR…ERGD). A disordered region spans residues 31–160 (KRRQLEDERR…VSNTPLRTVD (130 aa)). Over residues 104-117 (APATAKENAAAPSP) the composition is skewed to low complexity. Phosphoserine is present on residues serine 116 and serine 124. Phosphothreonine occurs at positions 141 and 145. Serine 162 carries the phosphoserine modification. Threonine 243 bears the Phosphothreonine mark. Serine 245 is modified (phosphoserine). 2 disordered regions span residues 247–296 (AGST…GQEP) and 335–378 (AEPK…DMKK). The span at 286–296 (GPPGIQPGQEP) shows a compositional bias: low complexity. Serine 346 carries the phosphoserine modification. A Phosphothreonine modification is found at threonine 367. At serine 369 the chain carries Phosphoserine. S-palmitoyl cysteine attachment occurs at residues cysteine 381 and cysteine 383. The residue at position 384 (cysteine 384) is a Cysteine methyl ester. Cysteine 384 is lipidated: S-farnesyl cysteine. A propeptide spans 385–387 (SIM) (removed in mature form).

This sequence belongs to the paralemmin family. In terms of assembly, interacts with dopamine receptor DRD3. Widely expressed with highest expression in brain and testis and intermediate expression in heart and adrenal gland.

It localises to the cell membrane. The protein localises to the cell projection. Its subcellular location is the filopodium membrane. The protein resides in the axon. It is found in the dendrite. It localises to the dendritic spine. The protein localises to the basolateral cell membrane. Its subcellular location is the apicolateral cell membrane. Its function is as follows. Involved in plasma membrane dynamics and cell process formation. Isoform 1 and isoform 2 are necessary for axonal and dendritic filopodia induction, for dendritic spine maturation and synapse formation in a palmitoylation-dependent manner. The chain is Paralemmin-1 (PALM) from Homo sapiens (Human).